We begin with the raw amino-acid sequence, 624 residues long: Prickle planar cell polarity protein 3 (624 aa).

Basic residues predominate over residues 1 to 12; the sequence is MFARGSRRRRSG. Positions 1–26 are disordered; the sequence is MFARGSRRRRSGRAPPEAEDPARGQP. The 109-residue stretch at 74–182 folds into the PET domain; sequence SDFQRHSISD…TVRIFPVTIT (109 aa). 3 consecutive LIM zinc-binding domains span residues 184–249, 250–309, and 310–373; these read AICE…CLRP, RCQA…RHAE, and YCDG…SETT. Positions 371-617 are disordered; that stretch reads ETTAPGPGRR…SHPVMPRQTR (247 aa). The span at 383–409 shows a compositional bias: low complexity; it reads SAGTVTTPLTTSTASFSATEGTSETAS. The segment covering 447–458 has biased composition (pro residues); the sequence is PEPPTESPGHPA. 2 positions are modified to phosphoserine: serine 475 and serine 491. The segment covering 509 to 541 has biased composition (basic residues); it reads SCHHHHHHRRRRQRHRRRGSHHHHHHPGRHGHH. The span at 545 to 564 shows a compositional bias: low complexity; it reads LGSGSDSGSCSSSPSSPSSE. The span at 587–601 shows a compositional bias: polar residues; it reads RTTQDTSTETFNSPA.

This sequence belongs to the prickle / espinas / testin family. Interacts with VANGL2 via its C-terminus. The VANGL2-dependent membrane recruitment of PRICKLE3 is a prerequisite for its polarization. Interacts with WTIP. WTIP is involved in the recruitment of PRICKLE3 to the basal body. Interacts with MT-ATP8, a component of the mitochondrial complex V. Widely expressed.

The protein localises to the cytoplasm. It is found in the cell membrane. The protein resides in the mitochondrion. Functionally, involved in the planar cell polarity (PCP) pathway that is essential for the polarization of epithelial cells during morphogenetic processes, including gastrulation and neurulation. PCP is maintained by two molecular modules, the global and the core modules, PRICKLE3 being part of the core module. Distinct complexes of the core module segregate to opposite sides of the cell, where they interact with the opposite complex in the neighboring cell at or near the adherents junctions. Involved in the organization of the basal body. Involved in cilia growth and positioning. Required for proper assembly, stability, and function of mitochondrial membrane ATP synthase (mitochondrial complex V). The sequence is that of Prickle planar cell polarity protein 3 from Mus musculus (Mouse).